Consider the following 600-residue polypeptide: Cytidine monophosphate-N-acetylneuraminic acid hydroxylase (600 aa).

Positions 9–107 (LSPVEVASLK…VEMDENNRLL (99 aa)) constitute a Rieske domain. [2Fe-2S] cluster is bound by residues Cys49, His51, Cys70, and His73.

Belongs to the CMP-Neu5Ac hydroxylase family. It depends on [2Fe-2S] cluster as a cofactor.

The protein localises to the cytoplasm. The enzyme catalyses CMP-N-acetyl-beta-neuraminate + 2 Fe(II)-[cytochrome b5] + O2 + 2 H(+) = CMP-N-glycoloyl-beta-neuraminate + 2 Fe(III)-[cytochrome b5] + H2O. It functions in the pathway amino-sugar metabolism; N-acetylneuraminate metabolism. Its function is as follows. Sialic acids are components of carbohydrate chains of glycoconjugates and are involved in cell-cell recognition and cell-pathogen interactions. Catalyzes the conversion of CMP-N-acetylneuraminic acid (CMP-Neu5Ac) into its hydroxylated derivative CMP-N-glycolylneuraminic acid (CMP-Neu5Gc), a sialic acid abundantly expressed at the surface of many cells. The protein is Cytidine monophosphate-N-acetylneuraminic acid hydroxylase (CMAH) of Gorilla gorilla gorilla (Western lowland gorilla).